Here is a 499-residue protein sequence, read N- to C-terminus: Phenylalanine--tRNA ligase alpha subunit (499 aa).

Residues T342, 381-383 (QID), and F422 each bind L-phenylalanine. E424 is a Mg(2+) binding site. Position 447 (F447) interacts with L-phenylalanine.

Belongs to the class-II aminoacyl-tRNA synthetase family. Phe-tRNA synthetase alpha subunit type 2 subfamily. As to quaternary structure, tetramer of two alpha and two beta subunits. The cofactor is Mg(2+).

It localises to the cytoplasm. The catalysed reaction is tRNA(Phe) + L-phenylalanine + ATP = L-phenylalanyl-tRNA(Phe) + AMP + diphosphate + H(+). The sequence is that of Phenylalanine--tRNA ligase alpha subunit from Pyrococcus horikoshii (strain ATCC 700860 / DSM 12428 / JCM 9974 / NBRC 100139 / OT-3).